The chain runs to 264 residues: Thymidylate synthase (264 aa).

Arg-21 serves as a coordination point for dUMP. His-51 contributes to the (6R)-5,10-methylene-5,6,7,8-tetrahydrofolate binding site. 126–127 is a binding site for dUMP; that stretch reads RR. The active-site Nucleophile is Cys-146. Residues 166–169, Asn-177, and 207–209 each bind dUMP; these read RSCD and HLY. Residue Asp-169 participates in (6R)-5,10-methylene-5,6,7,8-tetrahydrofolate binding. Residue Ala-263 coordinates (6R)-5,10-methylene-5,6,7,8-tetrahydrofolate.

The protein belongs to the thymidylate synthase family. Bacterial-type ThyA subfamily. Homodimer.

It localises to the cytoplasm. The catalysed reaction is dUMP + (6R)-5,10-methylene-5,6,7,8-tetrahydrofolate = 7,8-dihydrofolate + dTMP. The protein operates within pyrimidine metabolism; dTTP biosynthesis. Its function is as follows. Catalyzes the reductive methylation of 2'-deoxyuridine-5'-monophosphate (dUMP) to 2'-deoxythymidine-5'-monophosphate (dTMP) while utilizing 5,10-methylenetetrahydrofolate (mTHF) as the methyl donor and reductant in the reaction, yielding dihydrofolate (DHF) as a by-product. This enzymatic reaction provides an intracellular de novo source of dTMP, an essential precursor for DNA biosynthesis. This is Thymidylate synthase from Baumannia cicadellinicola subsp. Homalodisca coagulata.